A 325-amino-acid chain; its full sequence is Tetraacyldisaccharide 4'-kinase (325 aa).

55–62 (TAGGNGKT) contributes to the ATP binding site.

It belongs to the LpxK family.

The enzyme catalyses a lipid A disaccharide + ATP = a lipid IVA + ADP + H(+). It functions in the pathway glycolipid biosynthesis; lipid IV(A) biosynthesis; lipid IV(A) from (3R)-3-hydroxytetradecanoyl-[acyl-carrier-protein] and UDP-N-acetyl-alpha-D-glucosamine: step 6/6. In terms of biological role, transfers the gamma-phosphate of ATP to the 4'-position of a tetraacyldisaccharide 1-phosphate intermediate (termed DS-1-P) to form tetraacyldisaccharide 1,4'-bis-phosphate (lipid IVA). The sequence is that of Tetraacyldisaccharide 4'-kinase from Salmonella paratyphi C (strain RKS4594).